The primary structure comprises 64 residues: Small ribosomal subunit protein bS21 (64 aa).

The protein belongs to the bacterial ribosomal protein bS21 family.

This Karelsulcia muelleri (strain GWSS) (Sulcia muelleri) protein is Small ribosomal subunit protein bS21.